The sequence spans 42 residues: Proline-rich antimicrobial peptide 2 (42 aa).

Hemolymph.

It localises to the secreted. Its function is as follows. Antimicrobial protein. Has antibacterial activity against the Gram-positive bacterium M.luteus (MIC=8.6 uM). Lacks antibacterial activity against the Gram-positive bacteria B.circulans, L.monocytogenes, S.aureus, and S.lutea, and the Gram-negative bacteria E.coli D31, E.coli ATCC 25922, and S.typhimurium. Lacks antifungal activity against S.cerevisiae, P.pastoris, Z.marxianus, C.albicans, C.fructus, C.wickerhamii, A.niger, F.oxysporum, and T.harizianum. This is Proline-rich antimicrobial peptide 2 from Galleria mellonella (Greater wax moth).